Consider the following 195-residue polypeptide: Cysteine/O-acetylserine efflux protein (195 aa).

The Periplasmic portion of the chain corresponds to 1 to 9; the sequence is MTPILLSAF. Residues 10–32 form a helical membrane-spanning segment; that stretch reads WTYTLITAMTPGPNNILALSSAT. Residues 33–46 are Cytoplasmic-facing; the sequence is SHGFRQSTRVLAGM. Residues 47 to 67 traverse the membrane as a helical segment; it reads SLGFLIVMLLCAGISFSLAVI. Residues 68–69 lie on the Periplasmic side of the membrane; that stretch reads DP. The helical transmembrane segment at 70 to 90 threads the bilayer; the sequence is AAVHLLSWAGAAYIVWLAWKI. Over 91–104 the chain is Cytoplasmic; sequence ATSPTKEDGLQAKP. The chain crosses the membrane as a helical span at residues 105 to 125; the sequence is ISFWASFALQFVNVKIILYGV. The Periplasmic portion of the chain corresponds to 126-141; it reads TALSTFVLPQTQALSW. The helical transmembrane segment at 142-162 threads the bilayer; sequence VVGVSVLLAMIGTFGNVCWAL. The Cytoplasmic segment spans residues 163-176; that stretch reads AGHLFQRLFRQYGR. The helical transmembrane segment at 177–194 threads the bilayer; sequence QLNIVLALLLVYCAVRIF. A topological domain (periplasmic) is located at residue Tyr195.

This sequence belongs to the Rht family.

The protein localises to the cell inner membrane. The enzyme catalyses O-acetyl-L-serine(in) = O-acetyl-L-serine(out). The catalysed reaction is L-cysteine(in) = L-cysteine(out). In terms of biological role, exporter of O-acetylserine (OAS) and cysteine. The chain is Cysteine/O-acetylserine efflux protein (eamB) from Shigella flexneri serotype 5b (strain 8401).